Consider the following 104-residue polypeptide: SOSS complex subunit C (104 aa).

N-acetylalanine is present on Ala2. Ser50 is modified (phosphoserine).

This sequence belongs to the SOSS-C family. As to quaternary structure, component of the SOSS complex, composed of SOSS-B (SOSS-B1/NABP2 or SOSS-B2/NABP1), SOSS-A/INTS3 and SOSS-C/INIP. SOSS complexes containing SOSS-B1/NABP2 are more abundant than complexes containing SOSS-B2/NABP1. Interacts with INTS3; the interaction is direct.

Its subcellular location is the nucleus. Its function is as follows. Component of the SOSS complex, a multiprotein complex that functions downstream of the MRN complex to promote DNA repair and G2/M checkpoint. The SOSS complex associates with single-stranded DNA at DNA lesions and influences diverse endpoints in the cellular DNA damage response including cell-cycle checkpoint activation, recombinational repair and maintenance of genomic stability. Required for efficient homologous recombination-dependent repair of double-strand breaks (DSBs) and ATM-dependent signaling pathways. This is SOSS complex subunit C (INIP) from Homo sapiens (Human).